Consider the following 538-residue polypeptide: GSY2-interacting protein PIG2 (538 aa).

A phosphoserine mark is found at Ser-162, Ser-196, Ser-296, and Ser-304. Positions 384-508 (LNLSRGRPVF…NNDSANYKID (125 aa)) constitute a CBM21 domain.

Interacts with glycogen synthase 2 (GSY2); possibly also interacts with phosphatase 1 (GLC7). The protein is GSY2-interacting protein PIG2 (PIG2) of Saccharomyces cerevisiae (strain ATCC 204508 / S288c) (Baker's yeast).